A 368-amino-acid chain; its full sequence is Agmatine deiminase (368 aa).

The active-site Amidino-cysteine intermediate is the Cys-357.

The protein belongs to the agmatine deiminase family. As to quaternary structure, homodimer.

The enzyme catalyses agmatine + H2O = N-carbamoylputrescine + NH4(+). It functions in the pathway amine and polyamine biosynthesis; putrescine biosynthesis via agmatine pathway; N-carbamoylputrescine from agmatine: step 1/1. Its function is as follows. Mediates the hydrolysis of agmatine into N-carbamoylputrescine in the arginine decarboxylase (ADC) pathway of putrescine biosynthesis, a basic polyamine. The chain is Agmatine deiminase from Stutzerimonas stutzeri (strain A1501) (Pseudomonas stutzeri).